The following is a 410-amino-acid chain: MEPPPAPGPERLFDSHRLPSDGFLLLALLLYAPVGLCLLVLRLFLGLHVFLVSCALPDSVLRRFVVRTMCAVLGLVARQEDSGLRDHRVRVLISNHVTPFDHNIVNLLTTCSTPLLNSPPSFVCWSRGFMEMDRRVELVESLKKFCASTRLPPTPLLLFPEEEATNGREGLLRFSSWPFSIQDVVQPLTLQVQRPLVSVTVSDASWVSELLWSLFVPFTVYQVRWLHPIRRQLGEESEEFALRVQQLVAKELGQIGTRLTPADKAEHMKRQRHPRLRPQSVQSSFPSPPSPSSDVQLTTLAHRVKEVLPHVPLNVIQRDLARTGCVDLTITNLLEGAVAFMPEDVTEGSQSPPAPSAPKFPSSGLATPQPTALTFAKSSWARQESLQERKQALYEYARRRFRERQAQEAE.

The residue at position 1 (Met1) is an N-acetylmethionine. The Cytoplasmic segment spans residues 1 to 20 (MEPPPAPGPERLFDSHRLPS). An intramembrane segment occupies 21-41 (DGFLLLALLLYAPVGLCLLVL). Over 42 to 410 (RLFLGLHVFL…FRERQAQEAE (369 aa)) the chain is Cytoplasmic. Residues 258–295 (RLTPADKAEHMKRQRHPRLRPQSVQSSFPSPPSPSSDV) are disordered. At Ser292 the chain carries Phosphoserine. A CUE domain is found at 296–338 (QLTTLAHRVKEVLPHVPLNVIQRDLARTGCVDLTITNLLEGAV). Residues 344–369 (DVTEGSQSPPAPSAPKFPSSGLATPQ) form a disordered region. Position 363 is a phosphoserine (Ser363). The residue at position 367 (Thr367) is a Phosphothreonine.

The protein belongs to the AUP1 family. As to quaternary structure, identified in a complex that contains SEL1L, OS9, FAF2/UBXD8, UBE2J1/UBC6E and AUP1. Interacts with the cytoplasmic tail of ITGA2B, ITGA1, ITGA2, ITGA5, ITGAV and ITGAM. Interacts (via C-terminus) with UBE2G2; the interaction recruits UBE2G2 to lipid droplets. Interacts with ubiquitin ligases AMFR/gp78 and RNF139/TRC8; this promotes interaction of UBE2G2 with AMFR and RNF139. Interacts with apolipoprotein APOB. Monoubiquitinated and diubiquitinated. In terms of tissue distribution, ubiquitous.

The protein localises to the endoplasmic reticulum membrane. It is found in the lipid droplet. Its function is as follows. Plays a role in the translocation of terminally misfolded proteins from the endoplasmic reticulum lumen to the cytoplasm and their degradation by the proteasome. Plays a role in lipid droplet formation. Induces lipid droplet clustering. Recruits ubiquitin-conjugating enzyme UBE2G2 to lipid droplets which facilitates its interaction with ubiquitin ligases AMFR/gp78 and RNF139/TRC8, leading to sterol-induced ubiquitination of HMGCR and its subsequent proteasomal degradation. Also required for the degradation of INSIG1, SREBF1 and SREBF2. Plays a role in regulating assembly and secretion of very low density lipoprotein particles and stability of apolipoprotein APOB. This Mus musculus (Mouse) protein is Lipid droplet-regulating VLDL assembly factor AUP1.